Consider the following 227-residue polypeptide: MGGTTSTRRVTFEADENENITVVKGIRLSENVIDRMKESSPSGSKSQRYSGAYGASVSDEELKRRVAEELALEQAKKESEDQKRLKQAKELDRERAAANEQLTRAILRERICSEEERAKAKHLARQLEEKDRVLKKQDAFYKEQLARLEERSSEFYRVTTEQYQKAAEEVEAKFKRYESHPVCADLQAKILQCYRENTHQTLKCSALATQYMHCVNHAKQSMLEKGG.

Glycine 2 carries the N-myristoyl glycine lipid modification. Position 29 is a phosphoserine (serine 29). 2 disordered regions span residues aspartate 34–glutamate 61 and glutamate 73–aspartate 92. Residues serine 39 to tyrosine 49 show a composition bias toward polar residues. Tyrosine 49 is modified (phosphotyrosine). Serine 50, serine 56, and serine 58 each carry phosphoserine. N6-acetyllysine is present on lysine 142. The CHCH domain maps to histidine 180 to methionine 222. Short sequence motifs (cx9C motif) lie at residues cysteine 183–cysteine 193 and cysteine 204–cysteine 214. 2 cysteine pairs are disulfide-bonded: cysteine 183–cysteine 214 and cysteine 193–cysteine 204.

This sequence belongs to the MICOS complex subunit Mic19 family. Metazoan Mic19 subfamily. As to quaternary structure, component of the mitochondrial contact site and cristae organizing system (MICOS) complex, composed of at least MICOS10/MIC10, CHCHD3/MIC19, CHCHD6/MIC25, APOOL/MIC27, IMMT/MIC60, APOO/MIC23/MIC26 and MICOS13/MIC13. This complex was also known under the names MINOS or MitOS complex. The MICOS complex associates with mitochondrial outer membrane proteins SAMM50, MTX1 and MTX2 (together described as components of the mitochondrial outer membrane sorting assembly machinery (SAM) complex) and DNAJC11, mitochondrial inner membrane protein TMEM11 and with HSPA9. The MICOS and SAM complexes together with DNAJC11 are part of a large protein complex spanning both membranes termed the mitochondrial intermembrane space bridging (MIB) complex. Interacts with HSPA1A/HSPA1B and OPA1, preferentially with the soluble OPA1 form. Interacts with IMMT/MIC60. (Microbial infection) Interacts with human cytomegalovirus protein UL13; this interaction alters cristae architecture. Detected at low levels in brain, placenta, lung, liver, kidney and pancreas with increased levels in heart and skeletal muscle. Higher expression in primary lung cancers than in normal lung tissue.

It is found in the mitochondrion inner membrane. Its subcellular location is the cytoplasm. The protein localises to the nucleus. It localises to the mitochondrion. Functionally, component of the MICOS complex, a large protein complex of the mitochondrial inner membrane that plays crucial roles in the maintenance of crista junctions, inner membrane architecture, and formation of contact sites to the outer membrane. Plays an important role in the maintenance of the MICOS complex stability and the mitochondrial cristae morphology. Has also been shown to function as a transcription factor which binds to the BAG1 promoter and represses BAG1 transcription. The polypeptide is MICOS complex subunit MIC19 (CHCHD3) (Homo sapiens (Human)).